Here is a 200-residue protein sequence, read N- to C-terminus: Large ribosomal subunit protein uL4 (200 aa).

Residues 38–72 (GRQGTKQQKTRSDVAGGGKRPWRQKGTGRARAGTT) are disordered.

The protein belongs to the universal ribosomal protein uL4 family. As to quaternary structure, part of the 50S ribosomal subunit.

In terms of biological role, one of the primary rRNA binding proteins, this protein initially binds near the 5'-end of the 23S rRNA. It is important during the early stages of 50S assembly. It makes multiple contacts with different domains of the 23S rRNA in the assembled 50S subunit and ribosome. Functionally, forms part of the polypeptide exit tunnel. In Pseudomonas putida (strain ATCC 700007 / DSM 6899 / JCM 31910 / BCRC 17059 / LMG 24140 / F1), this protein is Large ribosomal subunit protein uL4.